Here is a 157-residue protein sequence, read N- to C-terminus: Protein-export protein SecB (157 aa).

Belongs to the SecB family. In terms of assembly, homotetramer, a dimer of dimers. One homotetramer interacts with 1 SecA dimer.

The protein resides in the cytoplasm. Functionally, one of the proteins required for the normal export of preproteins out of the cell cytoplasm. It is a molecular chaperone that binds to a subset of precursor proteins, maintaining them in a translocation-competent state. It also specifically binds to its receptor SecA. This Alcanivorax borkumensis (strain ATCC 700651 / DSM 11573 / NCIMB 13689 / SK2) protein is Protein-export protein SecB.